An 85-amino-acid chain; its full sequence is Exodeoxyribonuclease 7 small subunit (85 aa).

The interval 66-85 is disordered; it reads SGEGEEVPLDTPDAEDGDGE. Positions 68–85 are enriched in acidic residues; it reads EGEEVPLDTPDAEDGDGE.

Belongs to the XseB family. In terms of assembly, heterooligomer composed of large and small subunits.

The protein localises to the cytoplasm. The catalysed reaction is Exonucleolytic cleavage in either 5'- to 3'- or 3'- to 5'-direction to yield nucleoside 5'-phosphates.. In terms of biological role, bidirectionally degrades single-stranded DNA into large acid-insoluble oligonucleotides, which are then degraded further into small acid-soluble oligonucleotides. This Thioalkalivibrio sulfidiphilus (strain HL-EbGR7) protein is Exodeoxyribonuclease 7 small subunit.